A 109-amino-acid chain; its full sequence is MAERKQGGQGNGVGSSVVTEVKPKTQKPSLYRVLILNDDYTPMEFVVYVLERFFNKSREDATRIMLHVHQNGVGVCGVYTYEVAETKVAQVIDSARRHQHPLQCTMEKD.

A disordered region spans residues M1–E20.

Belongs to the ClpS family. As to quaternary structure, binds to the N-terminal domain of the chaperone ClpA.

Functionally, involved in the modulation of the specificity of the ClpAP-mediated ATP-dependent protein degradation. The sequence is that of ATP-dependent Clp protease adapter protein ClpS from Caulobacter vibrioides (strain NA1000 / CB15N) (Caulobacter crescentus).